A 782-amino-acid chain; its full sequence is Hypersensitive to pore-forming toxin protein 40 (782 aa).

Residues 138 to 203 form the Tudor; degenerate domain; that stretch reads ESEIVPGAMY…TLFVSDQFSI (66 aa). Polar residues-rich tracts occupy residues 332-346 and 413-443; these read SVNP…SSSM and FEST…STIQ. Disordered stretches follow at residues 332–351, 413–448, 472–492, and 617–672; these read SVNP…DCPY, FEST…NEED, IERP…NMSE, and VAQG…LEDP. Residues 617 to 634 are compositionally biased toward polar residues; it reads VAQGSNAPKTAPNDSVNS. A compositionally biased stretch (basic and acidic residues) spans 638–662; it reads DDIHETDKRGNHCKSVTEDPKDNKD.

The protein resides in the cytoplasm. The protein localises to the perinuclear region. In Caenorhabditis elegans, this protein is Hypersensitive to pore-forming toxin protein 40.